The sequence spans 65 residues: Large ribosomal subunit protein uL30 (65 aa).

It belongs to the universal ribosomal protein uL30 family. Part of the 50S ribosomal subunit.

The sequence is that of Large ribosomal subunit protein uL30 from Brucella suis (strain ATCC 23445 / NCTC 10510).